The primary structure comprises 414 residues: Bystin (414 aa).

The segment covering 1 to 11 (MSAKRNTKLRH) has biased composition (basic residues). The disordered stretch occupies residues 1–91 (MSAKRNTKLR…PSDDEGQADD (91 aa)). Basic and acidic residues predominate over residues 12-24 (APLEHAYVDDKSV). Positions 25 to 34 (RRNKRSKQRG) are enriched in basic residues.

It belongs to the bystin family.

The protein resides in the nucleus. It localises to the nucleolus. Its function is as follows. Required for processing of 20S pre-rRNA precursor and biogenesis of 40S ribosomal subunits. The protein is Bystin (bysl) of Monosiga brevicollis (Choanoflagellate).